Here is a 201-residue protein sequence, read N- to C-terminus: Holliday junction branch migration complex subunit RuvA (201 aa).

Residues 1-64 (MIGRLHGKII…EDAHLLFGFA (64 aa)) are domain I. Positions 65–143 (QKQDRTLFRE…GVAQSDFFEE (79 aa)) are domain II. The segment at 144–154 (HSVETIVATHS) is flexible linker. The domain III stretch occupies residues 154-201 (SHDPADEARDALVALGYKLADAEKMIKKVNKAGATSEQLIREALKASL).

It belongs to the RuvA family. As to quaternary structure, homotetramer. Forms an RuvA(8)-RuvB(12)-Holliday junction (HJ) complex. HJ DNA is sandwiched between 2 RuvA tetramers; dsDNA enters through RuvA and exits via RuvB. An RuvB hexamer assembles on each DNA strand where it exits the tetramer. Each RuvB hexamer is contacted by two RuvA subunits (via domain III) on 2 adjacent RuvB subunits; this complex drives branch migration. In the full resolvosome a probable DNA-RuvA(4)-RuvB(12)-RuvC(2) complex forms which resolves the HJ.

It is found in the cytoplasm. The RuvA-RuvB-RuvC complex processes Holliday junction (HJ) DNA during genetic recombination and DNA repair, while the RuvA-RuvB complex plays an important role in the rescue of blocked DNA replication forks via replication fork reversal (RFR). RuvA specifically binds to HJ cruciform DNA, conferring on it an open structure. The RuvB hexamer acts as an ATP-dependent pump, pulling dsDNA into and through the RuvAB complex. HJ branch migration allows RuvC to scan DNA until it finds its consensus sequence, where it cleaves and resolves the cruciform DNA. This Actinobacillus pleuropneumoniae serotype 7 (strain AP76) protein is Holliday junction branch migration complex subunit RuvA.